The sequence spans 789 residues: DNA topoisomerase 4 subunit A (789 aa).

Residues 34-499 (LPDLRDGLKP…EKQKVQDSDF (466 aa)) enclose the Topo IIA-type catalytic domain. The active-site O-(5'-phospho-DNA)-tyrosine intermediate is the Y122.

This sequence belongs to the type II topoisomerase GyrA/ParC subunit family. ParC type 2 subfamily. Heterotetramer composed of ParC and ParE.

The protein localises to the cell membrane. It catalyses the reaction ATP-dependent breakage, passage and rejoining of double-stranded DNA.. In terms of biological role, topoisomerase IV is essential for chromosome segregation. It relaxes supercoiled DNA. Performs the decatenation events required during the replication of a circular DNA molecule. This is DNA topoisomerase 4 subunit A from Mycoplasma pneumoniae (strain ATCC 29342 / M129 / Subtype 1) (Mycoplasmoides pneumoniae).